The primary structure comprises 83 residues: Small ribosomal subunit protein uS17 (83 aa).

Belongs to the universal ribosomal protein uS17 family. As to quaternary structure, part of the 30S ribosomal subunit.

One of the primary rRNA binding proteins, it binds specifically to the 5'-end of 16S ribosomal RNA. The protein is Small ribosomal subunit protein uS17 of Chlamydia abortus (strain DSM 27085 / S26/3) (Chlamydophila abortus).